The chain runs to 163 residues: Flagellar assembly factor FliW (163 aa).

Positions Pro136–Glu156 are enriched in basic and acidic residues. A disordered region spans residues Pro136–Gly163.

This sequence belongs to the FliW family. In terms of assembly, interacts with translational regulator CsrA and flagellin(s).

It is found in the cytoplasm. Its function is as follows. Acts as an anti-CsrA protein, binds CsrA and prevents it from repressing translation of its target genes, one of which is flagellin. Binds to flagellin and participates in the assembly of the flagellum. The protein is Flagellar assembly factor FliW of Geotalea uraniireducens (strain Rf4) (Geobacter uraniireducens).